A 142-amino-acid chain; its full sequence is ATP synthase epsilon chain (142 aa).

Belongs to the ATPase epsilon chain family. F-type ATPases have 2 components, CF(1) - the catalytic core - and CF(0) - the membrane proton channel. CF(1) has five subunits: alpha(3), beta(3), gamma(1), delta(1), epsilon(1). CF(0) has three main subunits: a, b and c.

The protein localises to the cell inner membrane. Functionally, produces ATP from ADP in the presence of a proton gradient across the membrane. The polypeptide is ATP synthase epsilon chain (Shewanella putrefaciens (strain CN-32 / ATCC BAA-453)).